Reading from the N-terminus, the 630-residue chain is Mesothelin (630 aa).

The N-terminal stretch at methionine 1–threonine 36 is a signal peptide. N-linked (GlcNAc...) asparagine glycosylation occurs at asparagine 57. Position 200 is a phosphoserine; by FAM20C (serine 200). The segment at serine 262 to arginine 286 is required for megakaryocyte-potentiating factor activity. A disulfide bridge links cysteine 302 with cysteine 326. N-linked (GlcNAc...) asparagine glycans are attached at residues asparagine 388, asparagine 496, and asparagine 523. Serine 606 carries GPI-anchor amidated serine lipidation. A propeptide spans glycine 607–alanine 630 (removed in mature form).

Belongs to the mesothelin family. Interacts with MUC16. Post-translationally, both MPF and the cleaved form of mesothelin are N-glycosylated. In terms of processing, proteolytically cleaved by a furin-like convertase to generate megakaryocyte-potentiating factor (MPF), and the cleaved form of mesothelin. In terms of tissue distribution, expressed in lung. Expressed at low levels in heart, placenta and kidney. Expressed in mesothelial cells. Highly expressed in mesotheliomas, ovarian cancers, and some squamous cell carcinomas (at protein level).

The protein resides in the cell membrane. The protein localises to the golgi apparatus. It localises to the secreted. Membrane-anchored forms may play a role in cellular adhesion. Functionally, megakaryocyte-potentiating factor (MPF) potentiates megakaryocyte colony formation in vitro. The polypeptide is Mesothelin (MSLN) (Homo sapiens (Human)).